The chain runs to 321 residues: Methionyl-tRNA formyltransferase (321 aa).

111-114 contributes to the (6S)-5,6,7,8-tetrahydrofolate binding site; that stretch reads GLLP.

Belongs to the Fmt family.

The catalysed reaction is L-methionyl-tRNA(fMet) + (6R)-10-formyltetrahydrofolate = N-formyl-L-methionyl-tRNA(fMet) + (6S)-5,6,7,8-tetrahydrofolate + H(+). In terms of biological role, attaches a formyl group to the free amino group of methionyl-tRNA(fMet). The formyl group appears to play a dual role in the initiator identity of N-formylmethionyl-tRNA by promoting its recognition by IF2 and preventing the misappropriation of this tRNA by the elongation apparatus. This chain is Methionyl-tRNA formyltransferase, found in Chlamydia pneumoniae (Chlamydophila pneumoniae).